Consider the following 493-residue polypeptide: Probable fatty acyl-CoA reductase 4 (493 aa).

Belongs to the fatty acyl-CoA reductase family. As to expression, expressed in the endodermal cell layer surrounding the central vasculature in roots. Expressed in the hilum region of seeds. Expressed in stamen filaments and receptacle of siliques.

The catalysed reaction is a long-chain fatty acyl-CoA + 2 NADPH + 2 H(+) = a long-chain primary fatty alcohol + 2 NADP(+) + CoA. Catalyzes the reduction of fatty acyl-CoA to fatty alcohols. Catalyzes specifically the formation of C18:0 and C20:0 fatty alcohols. Provides the fatty alcohols required for synthesis of suberin in roots, seed coat and wound-induced leaf tissue. Provides the fatty alcohols required for synthesis of alkyl hydroxycinnamates in root waxes. This chain is Probable fatty acyl-CoA reductase 4, found in Arabidopsis thaliana (Mouse-ear cress).